Consider the following 792-residue polypeptide: Molybdenum cofactor sulfurase (792 aa).

An N6-(pyridoxal phosphate)lysine modification is found at Lys-246. The active site involves Cys-414. One can recognise an MOSC domain in the interval 646-792 (LRLLRQSSQR…LTCGDVVVVT (147 aa)). Ser-748 carries the post-translational modification Phosphoserine.

The protein belongs to the class-V pyridoxal-phosphate-dependent aminotransferase family. MOCOS subfamily. Requires pyridoxal 5'-phosphate as cofactor.

It carries out the reaction Mo-molybdopterin + L-cysteine + AH2 = thio-Mo-molybdopterin + L-alanine + A + H2O. The protein operates within cofactor biosynthesis; molybdopterin biosynthesis. In terms of biological role, sulfurates the molybdenum cofactor. Sulfation of molybdenum is essential for xanthine dehydrogenase (XDH) and aldehyde oxidase (ADO) enzymes in which molybdenum cofactor is liganded by 1 oxygen and 1 sulfur atom in active form. The protein is Molybdenum cofactor sulfurase of Drosophila pseudoobscura pseudoobscura (Fruit fly).